The following is a 248-amino-acid chain: ATP synthase subunit a, chloroplastic (248 aa).

Helical transmembrane passes span 38–58 (QVLI…AIAV), 96–116 (VPFI…GALL), 135–155 (INTT…AGLT), 200–220 (LVVV…VMFL), and 221–241 (GLFT…AYIG).

Belongs to the ATPase A chain family. As to quaternary structure, F-type ATPases have 2 components, CF(1) - the catalytic core - and CF(0) - the membrane proton channel. CF(1) has five subunits: alpha(3), beta(3), gamma(1), delta(1), epsilon(1). CF(0) has four main subunits: a, b, b' and c.

It is found in the plastid. The protein resides in the chloroplast thylakoid membrane. Key component of the proton channel; it plays a direct role in the translocation of protons across the membrane. This chain is ATP synthase subunit a, chloroplastic, found in Nuphar advena (Common spatterdock).